Consider the following 521-residue polypeptide: Cytochrome P450 1A1 (521 aa).

F229 is a binding site for substrate. Heme is bound at residue C463.

Belongs to the cytochrome P450 family. The cofactor is heme.

The protein resides in the endoplasmic reticulum membrane. It localises to the microsome membrane. The enzyme catalyses an organic molecule + reduced [NADPH--hemoprotein reductase] + O2 = an alcohol + oxidized [NADPH--hemoprotein reductase] + H2O + H(+). In terms of biological role, cytochromes P450 are a group of heme-thiolate monooxygenases. They oxidize a variety of structurally unrelated compounds, including steroids, fatty acids, and xenobiotics. The sequence is that of Cytochrome P450 1A1 (cyp1a1) from Platichthys flesus (European flounder).